Here is a 269-residue protein sequence, read N- to C-terminus: Lck-interacting transmembrane adapter 1 (269 aa).

The Extracellular segment spans residues 1-7; it reads MRPPVPS. Residues 8–28 form a helical; Signal-anchor for type III membrane protein membrane-spanning segment; it reads APLALWVLGCFSLLLWLWALC. 2 S-palmitoyl cysteine lipidation sites follow: Cys-28 and Cys-31. At 29–269 the chain is on the cytoplasmic side; it reads TACHRKRAQR…VYESIKEMGL (241 aa). Residues 102 to 133 form a disordered region; sequence STRSQVPNSAFPPRQLPRAPPAAPATAPSTSS. A compositionally biased stretch (pro residues) spans 115–124; that stretch reads RQLPRAPPAA. Phosphotyrosine occurs at positions 137, 175, and 207. Positions 137-140 are interaction with GRB2; the sequence is YSNV. Interaction with CSK regions lie at residues 175–178 and 207–210; these read YACI and YSRV. Tyr-242 and Tyr-261 each carry phosphotyrosine; by LYN or LCK. The interaction with LCK and PIK3R1 stretch occupies residues 242-245; sequence YEAI. The tract at residues 261–264 is interaction with LCK, PLCG2 and PIK3R1; it reads YESI. Residue Ser-263 is modified to Phosphoserine.

In terms of assembly, when phosphorylated in response to TCR stimulation and/or CD4 costimulation, interacts with LCK, CSK, FYN, PTPN11/SHP2, GRB2, PIK3R1 and GRAP2. When phosphorylated in response to BCR activation, interacts with LYN, PIK3R1, PLCG2 and GRB2. Post-translationally, palmitoylation of Cys-28 and Cys-31 is required for raft targeting. Phosphorylated on tyrosines upon TCR activation and/or CD4 coreceptor stimulation, or upon BCR stimulation; which leads to the recruitment of SH2-containing proteins. Expressed in spleen and lung. Present in primary B-cells and peripheral T-cells (at protein level).

Its subcellular location is the cell membrane. Its function is as follows. Involved in BCR (B-cell antigen receptor)-mediated signaling in B-cells and TCR (T-cell antigen receptor)-mediated T-cell signaling in T-cells. In absence of TCR signaling, may be involved in CD4-mediated inhibition of T-cell activation. Couples activation of these receptors and their associated kinases with distal intracellular events such as calcium mobilization or MAPK activation through the recruitment of PLCG2, GRB2, GRAP2, and other signaling molecules. In Mus musculus (Mouse), this protein is Lck-interacting transmembrane adapter 1 (Lime1).